The primary structure comprises 240 residues: MNVYDLAVISHIENITDIEFEYILSSQDDKYLYVDNNILKLHYKDKELFIDFNSSEILNRINPSTKKCSVVQAVEGRSKDKLNILDTTAGLGRDTFTLAARGHRLVSLEKDCYIFVLLADTLNRARQIPNLKDIANQIELINIDANEYINTASISFDCIYIDPMFPQRNKSAKVKQGMQVLHDIAFNDDESNSNLLKNIIISKKTKKAVVKRPINADFLYGKKPTSQLKGKTNRFDVYSL.

Residues 93–94 (RD) and D162 each bind S-adenosyl-L-methionine.

It belongs to the methyltransferase superfamily. RsmJ family.

The protein resides in the cytoplasm. It catalyses the reaction guanosine(1516) in 16S rRNA + S-adenosyl-L-methionine = N(2)-methylguanosine(1516) in 16S rRNA + S-adenosyl-L-homocysteine + H(+). In terms of biological role, specifically methylates the guanosine in position 1516 of 16S rRNA. The polypeptide is Ribosomal RNA small subunit methyltransferase J (Francisella philomiragia subsp. philomiragia (strain ATCC 25017 / CCUG 19701 / FSC 153 / O#319-036)).